Reading from the N-terminus, the 127-residue chain is Probable tautomerase YusQ (127 aa).

Pro2 acts as the Proton acceptor; via imino nitrogen in catalysis.

Belongs to the 4-oxalocrotonate tautomerase family.

In Bacillus subtilis (strain 168), this protein is Probable tautomerase YusQ (yusQ).